The sequence spans 483 residues: GTPase Der (483 aa).

EngA-type G domains are found at residues 3–167 and 212–387; these read FTLA…GEER and LRIA…EIWN. GTP contacts are provided by residues 9–16, 56–60, 119–122, 218–225, 265–269, and 330–333; these read GRPNVGKS, DTAGL, NKAE, GRPNAGKS, DTAGM, and NKWD. Residues 388–472 form the KH-like domain; the sequence is RRISTGRLNR…PIRLSLRTSD (85 aa).

This sequence belongs to the TRAFAC class TrmE-Era-EngA-EngB-Septin-like GTPase superfamily. EngA (Der) GTPase family. In terms of assembly, associates with the 50S ribosomal subunit.

GTPase that plays an essential role in the late steps of ribosome biogenesis. In Brucella melitensis biotype 2 (strain ATCC 23457), this protein is GTPase Der.